Consider the following 153-residue polypeptide: Small ribosomal subunit protein bS6 (153 aa).

A disordered region spans residues 94–153; sequence EAHEEGPSAMMQKRDRDDRPRRDGDRPDRGPREDRGPRPPREGGFGDREDRPRRPREDRA.

The protein belongs to the bacterial ribosomal protein bS6 family.

Binds together with bS18 to 16S ribosomal RNA. This Agrobacterium fabrum (strain C58 / ATCC 33970) (Agrobacterium tumefaciens (strain C58)) protein is Small ribosomal subunit protein bS6.